The chain runs to 153 residues: Small ribosomal subunit protein uS9 (153 aa).

A disordered region spans residues 122-153 (KKAGFLTRDPRSTERKKYGLKKARKAPQYSKR). The span at 129–138 (RDPRSTERKK) shows a compositional bias: basic and acidic residues. Residues 139–153 (YGLKKARKAPQYSKR) are compositionally biased toward basic residues.

It belongs to the universal ribosomal protein uS9 family.

This Mycobacterium leprae (strain TN) protein is Small ribosomal subunit protein uS9 (rpsI).